The following is a 394-amino-acid chain: Mannosyl-3-phosphoglycerate synthase (394 aa).

This sequence belongs to the glycosyltransferase 2 family.

Its subcellular location is the cytoplasm. It carries out the reaction (2R)-3-phosphoglycerate + GDP-alpha-D-mannose = 2-O-(alpha-D-mannosyl)-3-phosphoglycerate + GDP + H(+). The protein operates within carbohydrate biosynthesis; 2-(alpha-D-mannosyl)-D-glycerate biosynthesis; 2-(alpha-D-mannosyl)-D-glycerate from GDP-alpha-D-mannose (MPG route): step 1/2. Transfers a mannosyl group from GDP-mannose to phosphoglycerate to form mannosyl-3-phosphoglycerate (MPG). This Pyrococcus furiosus (strain ATCC 43587 / DSM 3638 / JCM 8422 / Vc1) protein is Mannosyl-3-phosphoglycerate synthase (mngA).